Reading from the N-terminus, the 231-residue chain is Inner membrane protein YohK (231 aa).

Residue Met-1 is a topological domain, periplasmic. Residues 2-22 (MANIWWSLPLTLIVFFAARKL) traverse the membrane as a helical segment. Residues 23–29 (AARYKFP) lie on the Cytoplasmic side of the membrane. Residues 30–50 (LLNPLLVAMVVIIPFLMLTGI) traverse the membrane as a helical segment. Residues 51–90 (SYDSYFKGSEVLNDLLQPAVVALAYPLYEQLHQIRARWKS) are Periplasmic-facing. The chain crosses the membrane as a helical span at residues 91–111 (IITICFIGSVVAMVTGTSVAL). Topologically, residues 112-118 (LMGASPE) are cytoplasmic. The next 2 membrane-spanning stretches (helical) occupy residues 119–139 (IAAS…VGGS) and 140–160 (IGGI…LGAV). The Cytoplasmic segment spans residues 161–208 (FGHTLLNAMRIRTKAARGLAMGTASHALGTARCAELDYQEGAFSSLAL). The helical transmembrane segment at 209–229 (VLCGIITSLIAPFLFPIILAV) threads the bilayer. Topologically, residues 230-231 (MG) are periplasmic.

It belongs to the YohK (E.coli)/YwbG (IPA-22R) (B.subtilis) family.

It localises to the cell inner membrane. This Escherichia coli (strain K12) protein is Inner membrane protein YohK (yohK).